Consider the following 188-residue polypeptide: uncharacterized protein (188 aa).

This is an uncharacterized protein from Methanocaldococcus jannaschii (strain ATCC 43067 / DSM 2661 / JAL-1 / JCM 10045 / NBRC 100440) (Methanococcus jannaschii).